The chain runs to 258 residues: Lyso-ornithine lipid O-acyltransferase (258 aa).

A helical membrane pass occupies residues 7–29; sequence LLRSARLLGLVALGLGLAAWVSL.

This sequence belongs to the 1-acyl-sn-glycerol-3-phosphate acyltransferase family. OlsA subfamily.

The protein resides in the membrane. It carries out the reaction a lyso-ornithine lipid + a fatty acyl-[ACP] = an N(2)-[(3R)-3-(acyloxy)acyl]-L-ornithine lipid + holo-[ACP]. It functions in the pathway lipid metabolism. Its function is as follows. Catalyzes the second step in the formation of ornithine lipids, which are phosphorus-free membrane lipids. Uses acyl-acyl carrier protein (acyl-AcpP) as an acyl donor and converts lyso-ornithine lipid (LOL) into ornithine lipid (OL). The sequence is that of Lyso-ornithine lipid O-acyltransferase from Pseudomonas aeruginosa (strain ATCC 15692 / DSM 22644 / CIP 104116 / JCM 14847 / LMG 12228 / 1C / PRS 101 / PAO1).